The sequence spans 136 residues: Large ribosomal subunit protein bL20 (136 aa).

This sequence belongs to the bacterial ribosomal protein bL20 family.

In terms of biological role, binds directly to 23S ribosomal RNA and is necessary for the in vitro assembly process of the 50S ribosomal subunit. It is not involved in the protein synthesizing functions of that subunit. The protein is Large ribosomal subunit protein bL20 of Tropheryma whipplei (strain TW08/27) (Whipple's bacillus).